The following is a 180-amino-acid chain: Magnetosome protein MamS (180 aa).

Over 1 to 21 (MDFRPDQVVARIRGAVEGALT) the chain is Cytoplasmic. A helical transmembrane segment spans residues 22 to 42 (AQSVLGIGGALVLILVVIALL). Residues 43 to 180 (PDRFTRGEGK…EGLALWMTVQ (138 aa)) lie on the Lumenal side of the membrane.

It belongs to the magnetosome MamS family.

It localises to the magnetosome membrane. Its function is as follows. May play a role in magnetite crystal growth and size. The polypeptide is Magnetosome protein MamS (Magnetospirillum gryphiswaldense (strain DSM 6361 / JCM 21280 / NBRC 15271 / MSR-1)).